We begin with the raw amino-acid sequence, 768 residues long: Telomere repeats-binding bouquet formation protein 1 (768 aa).

2 ARM repeats span residues Glu-101–Gly-145 and Asn-341–Ser-384. Positions Glu-399–Asn-448 form a coiled coil. Basic and acidic residues-rich tracts occupy residues Gly-422–Asp-436 and Arg-461–Ser-475. Disordered stretches follow at residues Gly-422–Met-441 and Ala-454–Ser-475. An interaction with TERF1 region spans residues Gln-524–Pro-700. A Phosphothreonine modification is found at Thr-648. The Myb-like domain occupies Lys-707–Ile-760.

This sequence belongs to the TERB1 family. Component of the MAJIN-TERB1-TERB2 complex, composed of MAJIN, TERB1 and TERB2. Interacts with TERF1, STAG3 and SUN1. Interacts (via Myb-like domain) with the cohesin complex; probably mediated via interaction with STAG3. In terms of processing, phosphorylated by CDK. Phosphorylation by CDK takes place in late prophase when the cap exchange is prominent. is important for the stabilization of telomere attachment but dispenable for the cap exchange. As to expression, expressed in testis and fetal oocytes.

The protein resides in the chromosome. It localises to the telomere. Its subcellular location is the nucleus inner membrane. In terms of biological role, meiosis-specific telomere-associated protein involved in meiotic telomere attachment to the nucleus inner membrane, a crucial step for homologous pairing and synapsis. Component of the MAJIN-TERB1-TERB2 complex, which promotes telomere cap exchange by mediating attachment of telomeric DNA to the inner nuclear membrane and replacement of the protective cap of telomeric chromosomes: in early meiosis, the MAJIN-TERB1-TERB2 complex associates with telomeric DNA and the shelterin/telosome complex. During prophase, the complex matures and promotes release of the shelterin/telosome complex from telomeric DNA. In the MAJIN-TERB1-TERB2 complex, TERB1 probably mediates association with the shelterin/telosome complex via interaction with TERF1, promoting priming telomeric DNA attachment'. Promotes telomere association with the nuclear envelope and deposition of the SUN-KASH/LINC complex. Also recruits cohesin to telomeres to develop structural rigidity. This Mus musculus (Mouse) protein is Telomere repeats-binding bouquet formation protein 1.